The chain runs to 1483 residues: Ubiquitin fusion degradation protein 4 (1483 aa).

Residues 1–117 form a disordered region; that stretch reads MSENNSHNLD…NNEFGSNPLH (117 aa). Residues 8–18 are compositionally biased toward basic and acidic residues; the sequence is NLDEHESHSEN. A compositionally biased stretch (acidic residues) spans 61–70; it reads EADDGEDDDN. Thr-87 carries the phosphothreonine modification. Residue Lys-349 forms a Glycyl lysine isopeptide (Lys-Gly) (interchain with G-Cter in ubiquitin) linkage. Residues 1007–1081 form a K-box region; the sequence is CGVKSDSFIN…LIQLWKNKSK (75 aa). In terms of domain architecture, HECT spans 1376–1483; it reads AEHGYTMDSS…EEGAGAFLLS (108 aa). The active-site Glycyl thioester intermediate is Cys-1450.

This sequence belongs to the UPL family. K-HECT subfamily.

It carries out the reaction S-ubiquitinyl-[E2 ubiquitin-conjugating enzyme]-L-cysteine + [acceptor protein]-L-lysine = [E2 ubiquitin-conjugating enzyme]-L-cysteine + N(6)-ubiquitinyl-[acceptor protein]-L-lysine.. Functionally, E3 ubiquitin-protein ligase which accepts ubiquitin from an E2 ubiquitin-conjugating enzyme in the form of a thioester and then directly transfers the ubiquitin to targeted substrates. This Saccharomyces cerevisiae (strain ATCC 204508 / S288c) (Baker's yeast) protein is Ubiquitin fusion degradation protein 4 (UFD4).